Here is a 72-residue protein sequence, read N- to C-terminus: Translation initiation factor IF-1 (72 aa).

The S1-like domain maps to 1–72 (MAKEDMIEVE…TRGRITYRFK (72 aa)).

It belongs to the IF-1 family. In terms of assembly, component of the 30S ribosomal translation pre-initiation complex which assembles on the 30S ribosome in the order IF-2 and IF-3, IF-1 and N-formylmethionyl-tRNA(fMet); mRNA recruitment can occur at any time during PIC assembly.

It is found in the cytoplasm. One of the essential components for the initiation of protein synthesis. Stabilizes the binding of IF-2 and IF-3 on the 30S subunit to which N-formylmethionyl-tRNA(fMet) subsequently binds. Helps modulate mRNA selection, yielding the 30S pre-initiation complex (PIC). Upon addition of the 50S ribosomal subunit IF-1, IF-2 and IF-3 are released leaving the mature 70S translation initiation complex. The chain is Translation initiation factor IF-1 from Enterococcus faecalis (strain ATCC 700802 / V583).